A 299-amino-acid chain; its full sequence is DNA repair protein RecO (299 aa).

The segment at 1–62 is disordered; it reads MTLNSDADPD…GRRAPRTPAS (62 aa). Low complexity predominate over residues 25-41; sequence ASKPARSTRKSSSAKSA.

It belongs to the RecO family.

Involved in DNA repair and RecF pathway recombination. This is DNA repair protein RecO from Paraburkholderia xenovorans (strain LB400).